Reading from the N-terminus, the 265-residue chain is Undecaprenyl-diphosphatase (265 aa).

A run of 7 helical transmembrane segments spans residues Ser38 to Trp58, Leu80 to Glu100, Pro107 to Ala127, Ile135 to Gly155, Thr178 to Leu198, Ile216 to Ile236, and Phe244 to Ile264.

The protein belongs to the UppP family.

It is found in the cell inner membrane. The catalysed reaction is di-trans,octa-cis-undecaprenyl diphosphate + H2O = di-trans,octa-cis-undecaprenyl phosphate + phosphate + H(+). In terms of biological role, catalyzes the dephosphorylation of undecaprenyl diphosphate (UPP). Confers resistance to bacitracin. The chain is Undecaprenyl-diphosphatase from Rhizobium johnstonii (strain DSM 114642 / LMG 32736 / 3841) (Rhizobium leguminosarum bv. viciae).